A 437-amino-acid chain; its full sequence is Glutamyl-tRNA reductase (437 aa).

Substrate is bound by residues 49-52 (TCNR), S109, 114-116 (EGQ), and Q120. The active-site Nucleophile is the C50. Residue 198-203 (GAGRMS) participates in NADP(+) binding.

The protein belongs to the glutamyl-tRNA reductase family. In terms of assembly, homodimer.

It carries out the reaction (S)-4-amino-5-oxopentanoate + tRNA(Glu) + NADP(+) = L-glutamyl-tRNA(Glu) + NADPH + H(+). It participates in porphyrin-containing compound metabolism; protoporphyrin-IX biosynthesis; 5-aminolevulinate from L-glutamyl-tRNA(Glu): step 1/2. Its pathway is porphyrin-containing compound metabolism; chlorophyll biosynthesis. Its function is as follows. Catalyzes the NADPH-dependent reduction of glutamyl-tRNA(Glu) to glutamate 1-semialdehyde (GSA). This is Glutamyl-tRNA reductase from Synechococcus sp. (strain CC9311).